The sequence spans 662 residues: uncharacterized protein (662 aa).

Disordered stretches follow at residues 1–94, 107–237, 288–328, 406–440, and 506–580; these read MSQR…NENN, DHNN…VKYH, ETTS…TPSA, QSSFLNKPTNNTETPTTTTTTTTTTTTTPSQPIQM, and QNSI…MVSP. Low complexity predominate over residues 25 to 49; that stretch reads TTTTTPTPTTTTTTTSSLSSSTSST. Over residues 77-87 the composition is skewed to basic and acidic residues; that stretch reads DNIKLDNEKTF. Residues 109 to 161 are compositionally biased toward low complexity; sequence NNNNNNNNNNNNNNNNNNNNNNNNNNNNNNNNNNNNNNNNNNNNNNNNNNNNN. Positions 162–176 are enriched in polar residues; it reads DTQKGTNKNENNCTD. The span at 183 to 196 shows a compositional bias: low complexity; that stretch reads STSTTSSSETGSST. Over residues 203–212 the composition is skewed to polar residues; sequence KTPQSCLKKS. Residues 213 to 224 show a composition bias toward low complexity; sequence NNNNNDNNNNNN. Positions 226–235 are enriched in basic residues; it reads KTPRSTKKVK. Low complexity-rich tracts occupy residues 288–308, 413–434, 515–526, and 535–575; these read ETTSVTSTTSTATTTTTTPIP, PTNNTETPTTTTTTTTTTTTTP, PTKSSSSTSIQQ, and NINN…NNNN.

This is an uncharacterized protein from Dictyostelium discoideum (Social amoeba).